A 185-amino-acid polypeptide reads, in one-letter code: HTH-type transcriptional regulator Hpr (185 aa).

In terms of domain architecture, HTH marR-type spans 13-157; the sequence is AMIFSQRIAQ…LIAILRNIYG (145 aa). The segment at residues 63 to 86 is a DNA-binding region (H-T-H motif); sequence ISEIAKFGVMHVSTAFNFSKKLEE.

Homodimer.

Functionally, negative regulator of protease production and sporulation. This Bacillus mycoides (strain KBAB4) (Bacillus weihenstephanensis) protein is HTH-type transcriptional regulator Hpr.